The primary structure comprises 254 residues: Major prion protein (254 aa).

The N-terminal stretch at M1–C22 is a signal peptide. The interaction with ADGRG6 stretch occupies residues K23 to Y38. Residues K23–S231 form an interaction with GRB2, ERI3 and SYN1 region. The tract at residues R25–P104 is disordered. P44 bears the Hydroxyproline mark. 5 repeat units span residues P51–Q58, P59–Q66, P67–Q74, P75–Q82, and P83–Q90. Positions P51–Q90 are 5 X 8 AA tandem repeats of P-H-G-G-G-W-G-Q. Positions G54–T94 are enriched in gly residues. Cu(2+) contacts are provided by H60, G61, G62, H68, G69, G70, H76, G77, G78, H84, G85, and G86. C178 and C213 are oxidised to a cystine. N-linked (GlcNAc...) asparagine glycosylation is found at N180 and N196. S230 is lipidated: GPI-anchor amidated serine. Positions S231–G254 are cleaved as a propeptide — removed in mature form.

This sequence belongs to the prion family. Monomer and homodimer. Has a tendency to aggregate into amyloid fibrils containing a cross-beta spine, formed by a steric zipper of superposed beta-strands. Soluble oligomers may represent an intermediate stage on the path to fibril formation. Copper binding may promote oligomerization. Interacts with GRB2, APP, ERI3/PRNPIP and SYN1. Mislocalized cytosolically exposed PrP interacts with MGRN1; this interaction alters MGRN1 subcellular location and causes lysosomal enlargement. Interacts with APP. Interacts with KIAA1191. Interacts with ADGRG6. Post-translationally, N-glycosylated. In terms of tissue distribution, highly expressed in the brain, lung, kidney and heart. Expressed at low levels in the liver and spleen.

The protein resides in the cell membrane. The protein localises to the golgi apparatus. In terms of biological role, its primary physiological function is unclear. May play a role in neuronal development and synaptic plasticity. May be required for neuronal myelin sheath maintenance. May promote myelin homeostasis through acting as an agonist for ADGRG6 receptor. May play a role in iron uptake and iron homeostasis. Soluble oligomers are toxic to cultured neuroblastoma cells and induce apoptosis (in vitro). Association with GPC1 (via its heparan sulfate chains) targets PRNP to lipid rafts. Also provides Cu(2+) or Zn(2+) for the ascorbate-mediated GPC1 deaminase degradation of its heparan sulfate side chains. The sequence is that of Major prion protein (Prnp) from Mus musculus (Mouse).